Consider the following 214-residue polypeptide: Ribosomal RNA large subunit methyltransferase E (214 aa).

5 residues coordinate S-adenosyl-L-methionine: Gly60, Trp62, Asp86, Asp102, and Asp127. Lys167 functions as the Proton acceptor in the catalytic mechanism.

This sequence belongs to the class I-like SAM-binding methyltransferase superfamily. RNA methyltransferase RlmE family.

It is found in the cytoplasm. It catalyses the reaction uridine(2552) in 23S rRNA + S-adenosyl-L-methionine = 2'-O-methyluridine(2552) in 23S rRNA + S-adenosyl-L-homocysteine + H(+). Its function is as follows. Specifically methylates the uridine in position 2552 of 23S rRNA at the 2'-O position of the ribose in the fully assembled 50S ribosomal subunit. The sequence is that of Ribosomal RNA large subunit methyltransferase E from Janthinobacterium sp. (strain Marseille) (Minibacterium massiliensis).